The following is a 154-amino-acid chain: Myoglobin (154 aa).

The 147-residue stretch at 2-148 (GLSDGEWQLV…FRKDMASNYK (147 aa)) folds into the Globin domain. Residue Ser4 is modified to Phosphoserine. His65 provides a ligand contact to nitrite. His65 is a binding site for O2. Thr68 bears the Phosphothreonine mark. His94 is a binding site for heme b.

Belongs to the globin family. In terms of assembly, monomeric.

Its subcellular location is the cytoplasm. It localises to the sarcoplasm. It carries out the reaction Fe(III)-heme b-[protein] + nitric oxide + H2O = Fe(II)-heme b-[protein] + nitrite + 2 H(+). The enzyme catalyses H2O2 + AH2 = A + 2 H2O. Its function is as follows. Monomeric heme protein which primary function is to store oxygen and facilitate its diffusion within muscle tissues. Reversibly binds oxygen through a pentacoordinated heme iron and enables its timely and efficient release as needed during periods of heightened demand. Depending on the oxidative conditions of tissues and cells, and in addition to its ability to bind oxygen, it also has a nitrite reductase activity whereby it regulates the production of bioactive nitric oxide. Under stress conditions, like hypoxia and anoxia, it also protects cells against reactive oxygen species thanks to its pseudoperoxidase activity. This Pan troglodytes (Chimpanzee) protein is Myoglobin (MB).